We begin with the raw amino-acid sequence, 139 residues long: ATP synthase epsilon chain, chloroplastic (139 aa).

Belongs to the ATPase epsilon chain family. In terms of assembly, F-type ATPases have 2 components, CF(1) - the catalytic core - and CF(0) - the membrane proton channel. CF(1) has five subunits: alpha(3), beta(3), gamma(1), delta(1), epsilon(1). CF(0) has three main subunits: a, b and c.

It localises to the plastid. It is found in the chloroplast thylakoid membrane. Functionally, produces ATP from ADP in the presence of a proton gradient across the membrane. The sequence is that of ATP synthase epsilon chain, chloroplastic from Welwitschia mirabilis (Tree tumbo).